The following is a 115-amino-acid chain: Large ribosomal subunit protein bL20 (115 aa).

The protein belongs to the bacterial ribosomal protein bL20 family.

Functionally, binds directly to 23S ribosomal RNA and is necessary for the in vitro assembly process of the 50S ribosomal subunit. It is not involved in the protein synthesizing functions of that subunit. The protein is Large ribosomal subunit protein bL20 of Prochlorococcus marinus (strain MIT 9313).